The following is a 311-amino-acid chain: Glycine--tRNA ligase alpha subunit (311 aa).

The protein belongs to the class-II aminoacyl-tRNA synthetase family. In terms of assembly, tetramer of two alpha and two beta subunits.

It localises to the cytoplasm. It catalyses the reaction tRNA(Gly) + glycine + ATP = glycyl-tRNA(Gly) + AMP + diphosphate. In Bradyrhizobium diazoefficiens (strain JCM 10833 / BCRC 13528 / IAM 13628 / NBRC 14792 / USDA 110), this protein is Glycine--tRNA ligase alpha subunit.